A 265-amino-acid chain; its full sequence is MNTTRTLDNSTIHLPRILCLHGGGTNARIFRAQCRGLIAGLKSEYRLVFAQAPFASQAGSDVLSVYSQWGPFRRWLRWRPEHPVIPPEDAVQEIDTWLEKAMHQDDLAGATGEWIALLGFSQGAKVSASLLYRQQSWQELFGTRPAGINFRFGILLAGQAPFISMDSDLTLDPPLPDASQITDLKHSERELFYGKGHVLRIPTLHVHGLRDKGLDHHRKLFEDFCAPQSRRLIEWDGDHRVPLKLKDVSLVIHQIRELAKETGVY.

Active-site charge relay system residues include Ser-121, Asp-211, and His-239.

Belongs to the LovG family.

It participates in secondary metabolite biosynthesis. In terms of biological role, esterase; part of the cla gene cluster that produces clavatol and ortho-quinone methide. The clavatol biosynthesis cluster cla and the terrestric acid cluster tra are both involved in the production of peniphenones and penilactones. The non-reducing PKS claF is responsible for the formation of clavatol from successive condensations of 3 malonyl-CoA units, presumably with a simple acetyl-CoA starter unit, and 2 methylation steps. The esterase claE probably collaborates with claF by catalyzing the hydrolysis of ACP-bound acyl intermediates to free the ACP from stalled intermediates. The clavatol oxidase claD then converts clavatol to hydroxyclavatol. Spontaneous dehydration of hydroxyclavatol leads to the accumulation of the highly active ortho-quinone methide. On the other hand, the PKS-NRPS hybrid traA is involved in the formation of crustosic acid, with the help of traB and traD. The polyketide synthase module (PKS) of traA is responsible for the synthesis of the polyketide backbone via the condensation of an acetyl-CoA starter unit with 3 malonyl-CoA units. The downstream nonribosomal peptide synthetase (NRPS) module then amidates the carboxyl end of the polyketide with L-malic acid. Because traA lacks a designated enoylreductase (ER) domain, the required activity is provided the enoyl reductase traG. Crustosic acid undergoes decarboxylation and isomerization to the terrestric acid, catalyzed by the 2-oxoglutarate-dependent dioxygenase traH. Both acids are further converted to the 2 gamma-butyrolactones (R)-5-methyltetronic acid and (S)-5-carboxylmethyltetronic acid, with involvement of the cytochrome P450 monooxygenase claJ. Spontaneous addition of the methide to these gamma-butyrolactones leads to peniphenone D and penilactone D, which undergo again stereospecific attacking by methide to give penilactones A and B. This chain is Esterase claE, found in Penicillium crustosum (Blue mold fungus).